We begin with the raw amino-acid sequence, 137 residues long: Large ribosomal subunit protein eL28 (137 aa).

Position 2 is an N-acetylserine (serine 2). Residues lysine 58 and lysine 65 each participate in a glycyl lysine isopeptide (Lys-Gly) (interchain with G-Cter in SUMO2) cross-link. Residue serine 115 is modified to Phosphoserine.

This sequence belongs to the eukaryotic ribosomal protein eL28 family. In terms of assembly, component of the large ribosomal subunit.

The protein localises to the cytoplasm. Its function is as follows. Component of the large ribosomal subunit. The ribosome is a large ribonucleoprotein complex responsible for the synthesis of proteins in the cell. This Homo sapiens (Human) protein is Large ribosomal subunit protein eL28 (RPL28).